A 251-amino-acid polypeptide reads, in one-letter code: Phosphomannomutase (251 aa).

The active-site Nucleophile is Asp18. Mg(2+)-binding residues include Asp18 and Asp20. The active-site Proton donor/acceptor is the Asp20. Positions 27, 129, 140, 147, 185, and 187 each coordinate alpha-D-mannose 1-phosphate. Asp213, Phe225, Asp227, and Thr230 together coordinate Mg(2+).

Belongs to the eukaryotic PMM family. As to quaternary structure, homodimer. The cofactor is Mg(2+).

It localises to the cytoplasm. The catalysed reaction is alpha-D-mannose 1-phosphate = D-mannose 6-phosphate. The protein operates within nucleotide-sugar biosynthesis; GDP-alpha-D-mannose biosynthesis; alpha-D-mannose 1-phosphate from D-fructose 6-phosphate: step 2/2. Its function is as follows. Catalyzes the interconversion of mannose-6-phosphate to mannose-1-phosphate, the precursor for the synthesis of GDP-mannose. GDP-mannose is an essential sugar nucleotide for the synthesis of D-mannose-containing cell wall polysaccharides (galactomannans and glucomannans), glycolipids, glycoproteins and the antioxidant L-ascorbate. In Galdieria sulphuraria (Red alga), this protein is Phosphomannomutase.